The following is a 255-amino-acid chain: Small ribosomal subunit protein eS1A (255 aa).

A compositionally biased stretch (basic residues) spans 1 to 18 (MAVGKNKRLSKGKKGQKK). The tract at residues 1 to 20 (MAVGKNKRLSKGKKGQKKRV) is disordered. An N-acetylalanine; partial modification is found at Ala2. Thr245 carries the phosphothreonine modification. Residue Lys248 forms a Glycyl lysine isopeptide (Lys-Gly) (interchain with G-Cter in ubiquitin) linkage. The residue at position 254 (Thr254) is a Phosphothreonine.

The protein belongs to the eukaryotic ribosomal protein eS1 family. Component of the small ribosomal subunit. Mature ribosomes consist of a small (40S) and a large (60S) subunit. The 40S subunit contains about 33 different proteins and 1 molecule of RNA (18S). The 60S subunit contains about 49 different proteins and 3 molecules of RNA (25S, 5.8S and 5S).

It is found in the cytoplasm. In Saccharomyces cerevisiae (strain RM11-1a) (Baker's yeast), this protein is Small ribosomal subunit protein eS1A.